The sequence spans 162 residues: Transcription elongation factor GreA (162 aa).

A coiled-coil region spans residues 45–74; sequence ENAEYEAAREKQAFIEGRIKELEDMTARAE.

This sequence belongs to the GreA/GreB family.

Functionally, necessary for efficient RNA polymerase transcription elongation past template-encoded arresting sites. The arresting sites in DNA have the property of trapping a certain fraction of elongating RNA polymerases that pass through, resulting in locked ternary complexes. Cleavage of the nascent transcript by cleavage factors such as GreA or GreB allows the resumption of elongation from the new 3'terminus. GreA releases sequences of 2 to 3 nucleotides. This Rickettsia typhi (strain ATCC VR-144 / Wilmington) protein is Transcription elongation factor GreA.